We begin with the raw amino-acid sequence, 266 residues long: Undecaprenyl-diphosphatase (266 aa).

Helical transmembrane passes span 1–21, 39–59, 87–107, 114–134, 149–169, 183–203, 218–238, and 246–266; these read MDTF…FLPI, QGLS…VIYF, WWII…KDFI, AEVI…ADKM, ALLI…RSGA, AAAR…AILV, ALIL…HYFL, and MTPF…FIFF.

It belongs to the UppP family.

It localises to the cell inner membrane. It catalyses the reaction di-trans,octa-cis-undecaprenyl diphosphate + H2O = di-trans,octa-cis-undecaprenyl phosphate + phosphate + H(+). Catalyzes the dephosphorylation of undecaprenyl diphosphate (UPP). Confers resistance to bacitracin. The polypeptide is Undecaprenyl-diphosphatase (Shewanella baltica (strain OS223)).